Here is a 434-residue protein sequence, read N- to C-terminus: UDP-N-acetylmuramoylalanine--D-glutamate ligase (434 aa).

126 to 132 (GTSGKTT) contacts ATP.

This sequence belongs to the MurCDEF family.

It localises to the cytoplasm. It catalyses the reaction UDP-N-acetyl-alpha-D-muramoyl-L-alanine + D-glutamate + ATP = UDP-N-acetyl-alpha-D-muramoyl-L-alanyl-D-glutamate + ADP + phosphate + H(+). It functions in the pathway cell wall biogenesis; peptidoglycan biosynthesis. Cell wall formation. Catalyzes the addition of glutamate to the nucleotide precursor UDP-N-acetylmuramoyl-L-alanine (UMA). The protein is UDP-N-acetylmuramoylalanine--D-glutamate ligase of Desulfovibrio desulfuricans (strain ATCC 27774 / DSM 6949 / MB).